Consider the following 440-residue polypeptide: Argininosuccinate lyase (440 aa).

The protein belongs to the lyase 1 family. Argininosuccinate lyase subfamily.

It is found in the cytoplasm. The catalysed reaction is 2-(N(omega)-L-arginino)succinate = fumarate + L-arginine. It participates in amino-acid biosynthesis; L-arginine biosynthesis; L-arginine from L-ornithine and carbamoyl phosphate: step 3/3. This Clostridium botulinum (strain 657 / Type Ba4) protein is Argininosuccinate lyase.